Consider the following 94-residue polypeptide: MTISLKDVEHVAMLARLKLSDEEKEMYTKQLNDILKYAEQLQELDTENVKPTAHVLPIKNVFREDKVHQHLDPEKALANAPEREENFFKVPKII.

This sequence belongs to the GatC family. Heterotrimer of A, B and C subunits.

It carries out the reaction L-glutamyl-tRNA(Gln) + L-glutamine + ATP + H2O = L-glutaminyl-tRNA(Gln) + L-glutamate + ADP + phosphate + H(+). The enzyme catalyses L-aspartyl-tRNA(Asn) + L-glutamine + ATP + H2O = L-asparaginyl-tRNA(Asn) + L-glutamate + ADP + phosphate + 2 H(+). Its function is as follows. Allows the formation of correctly charged Asn-tRNA(Asn) or Gln-tRNA(Gln) through the transamidation of misacylated Asp-tRNA(Asn) or Glu-tRNA(Gln) in organisms which lack either or both of asparaginyl-tRNA or glutaminyl-tRNA synthetases. The reaction takes place in the presence of glutamine and ATP through an activated phospho-Asp-tRNA(Asn) or phospho-Glu-tRNA(Gln). The protein is Aspartyl/glutamyl-tRNA(Asn/Gln) amidotransferase subunit C of Carboxydothermus hydrogenoformans (strain ATCC BAA-161 / DSM 6008 / Z-2901).